The chain runs to 242 residues: Caffeoyl-CoA O-methyltransferase 2 (242 aa).

Lysine 16 contacts substrate. Residues threonine 58, glutamate 80, 82–83, serine 88, aspartate 106, and alanine 135 each bind S-adenosyl-L-methionine; that span reads GV. Aspartate 158 contacts substrate. Aspartate 158 is a binding site for a divalent metal cation. Aspartate 160 is a binding site for S-adenosyl-L-methionine. A divalent metal cation contacts are provided by aspartate 184 and asparagine 185. Asparagine 189 is a substrate binding site.

Belongs to the class I-like SAM-binding methyltransferase superfamily. Cation-dependent O-methyltransferase family. CCoAMT subfamily. A divalent metal cation is required as a cofactor. Mostly expressed in petal limbs and tubes, and, at low levels, in stems, roots and leaves.

Its subcellular location is the cytoplasm. It is found in the cytosol. The enzyme catalyses (E)-caffeoyl-CoA + S-adenosyl-L-methionine = (E)-feruloyl-CoA + S-adenosyl-L-homocysteine + H(+). It catalyses the reaction (E)-5-hydroxyferuloyl-CoA + S-adenosyl-L-methionine = (E)-sinapoyl-CoA + S-adenosyl-L-homocysteine + H(+). It participates in aromatic compound metabolism; phenylpropanoid biosynthesis. Involved in the production of floral volatile phenylpropanoids in flowers of fragrant cultivars (e.g. cv. Mitchell and cv. V26) from cinnamic acid, a common precursor with the anthocyanin biosynthesis pathway involved in flower pigmentation. Methylates caffeoyl-CoA to feruloyl-CoA, also able to methylate 5-hydroxyferuloyl-CoA. The polypeptide is Caffeoyl-CoA O-methyltransferase 2 (Petunia hybrida (Petunia)).